Consider the following 594-residue polypeptide: Transcriptional repressor p66-beta (594 aa).

Serine 17 carries the post-translational modification Phosphoserine. Glycyl lysine isopeptide (Lys-Gly) (interchain with G-Cter in SUMO2) cross-links involve residues lysine 33 and lysine 66. Positions 62–143 (ELPTKQDGSG…ASSPRSSSRM (82 aa)) are disordered. Over residues 74–89 (GYEEKLNGNLRPHGDN) the composition is skewed to basic and acidic residues. Lysine 98 is covalently cross-linked (Glycyl lysine isopeptide (Lys-Gly) (interchain with G-Cter in SUMO2)). Positions 109 to 119 (SARRSEPDRGR) are enriched in basic and acidic residues. A Phosphothreonine modification is found at threonine 121. Phosphoserine occurs at positions 123, 130, 135, and 136. Over residues 130 to 140 (SDNEASSPRSS) the composition is skewed to low complexity. Residues 141–195 (SRMEERLKAANLEMFKGKGMEERQQLIKQLRDELRLEEARLVLLKKLRQSQLQKE) adopt a coiled-coil conformation. Lysine 148 is covalently cross-linked (Glycyl lysine isopeptide (Lys-Gly) (interchain with G-Cter in SUMO2)). The CR1; interaction with MBD2 and MBD3 stretch occupies residues 166 to 191 (LIKQLRDELRLEEARLVLLKKLRQSQ). Lysine 200 participates in a covalent cross-link: Glycyl lysine isopeptide (Lys-Gly) (interchain with G-Cter in SUMO2). Phosphoserine is present on serine 209. The disordered stretch occupies residues 214–237 (SPAHVGQQGLSKLPSRPGAQGIEP). Lysine 282 participates in a covalent cross-link: Glycyl lysine isopeptide (Lys-Gly) (interchain with G-Cter in SUMO2). 3 positions are modified to phosphoserine: serine 334, serine 339, and serine 341. A CR2; histone tail-binding region spans residues 341-481 (SAMSDAANSQ…QEQEIEQRLQ (141 aa)). Residues lysine 354, lysine 455, and lysine 468 each participate in a glycyl lysine isopeptide (Lys-Gly) (interchain with G-Cter in SUMO2) cross-link. The segment at 415–468 (RVEPFVCAQCRTDFTPHWKQEKNGKILCEQCMTSNQKKALKAEHTNRLKNAFVK) adopts a GATA-type zinc-finger fold. A coiled-coil region spans residues 450–483 (QKKALKAEHTNRLKNAFVKALQQEQEIEQRLQQQ). Residue serine 487 is modified to Phosphoserine. Lysine 499 participates in a covalent cross-link: Glycyl lysine isopeptide (Lys-Gly) (interchain with G-Cter in SUMO2).

In terms of assembly, homooligomer. Component of the nucleosome remodeling and deacetylase (NuRD) repressor complex, composed of core proteins MTA1, MTA2, MTA3, RBBP4, RBBP7, HDAC1, HDAC2, MBD2, MBD3, and peripherally associated proteins CDK2AP1, CDK2AP2, GATAD2A, GATAD2B, CHD3, CHD4 and CHD5. The exact stoichiometry of the NuRD complex is unknown, and some subunits such as MBD2 and MBD3, GATAD2A and GATAD2B, and CHD3, CHD4 and CHD5 define mutually exclusive NuRD complexes. Interacts with MBD2; this is required for the enhancement of MBD2-mediated repression and for targeting to the chromatin. Interacts with MBD3. Component of the MeCP1 histone deacetylase complex. Interacts with histone tails, including that of histones H2A, H2B, H3 and H4. Interacts with ERCC6.

The protein localises to the nucleus speckle. It localises to the nucleus. It is found in the chromosome. Functionally, transcriptional repressor. Acts as a component of the histone deacetylase NuRD complex which participates in the remodeling of chromatin. Enhances MBD2-mediated repression. Efficient repression requires the presence of GATAD2A. Targets MBD3 to discrete loci in the nucleus. May play a role in synapse development. The polypeptide is Transcriptional repressor p66-beta (Gatad2b) (Mus musculus (Mouse)).